Here is a 314-residue protein sequence, read N- to C-terminus: MATCIDTCRTGNTQDDDSRFCCIKNFFRPGFSVNRKIHHTQIEDDDDVWIKMLEEAKSDVKQEPILSNYYYASITSHRSLESALAHILSVKLSNLNLPSNTLFELFISVLEESPEIIESTKQDLIAVKERDPACISYVHCFLGFKGFLACQAHRIAHTLWKQNRKIVALLIQNRVSESFAVDIHPGAKIGKGILLDHATGVVIGETAVVGDNVSILHGVTLGGTGKQSGDRHPKIGDGVLIGAGSCILGNITIGEGAKIGSGSVVVKDVPARTTAVGNPARLIGGKENPRKHDKIPCLTMDQTSYLTEWSDYVI.

Belongs to the transferase hexapeptide repeat family. As to quaternary structure, homomultimer. Interacts with OASA1 and CYP20-3. Component of the cysteine synthase complex (CSC) composed of two OAS-TL dimers and one SAT hexamer. As to expression, mostly expressed in leaves. Localized in cortex, trichomes and vascular tissues, particularly in phloem.

It is found in the plastid. Its subcellular location is the chloroplast. It localises to the cytoplasm. It catalyses the reaction L-serine + acetyl-CoA = O-acetyl-L-serine + CoA. It functions in the pathway amino-acid biosynthesis; L-cysteine biosynthesis; L-cysteine from L-serine: step 1/2. Serine acetyltransferase which catalyzes the formation of O-acetyl-L-serine from acetyl-CoA and L-serine. Also displays O-acetylserine (thio1)-lyase activity in vitro. May be involved in detoxification process by mediating the production of glutathione. In Arabidopsis thaliana (Mouse-ear cress), this protein is Serine acetyltransferase 1, chloroplastic (SAT1).